Reading from the N-terminus, the 122-residue chain is MRAPLLLMLLALGSALRSPQPPEARAKLCGHHLVRTLVRVCGGPRWSPEATQPVETRDRELLQWLEQRHLLHALVADVDPALDPQLPRQASQRQRRSAATNAVHRCCLTGCTQQDLLGLCPH.

Residues 1–15 form the signal peptide; it reads MRAPLLLMLLALGSA. Intrachain disulfides connect C29–C107, C41–C120, and C106–C111.

This sequence belongs to the insulin family. In terms of assembly, heterodimer of a B chain and an A chain linked by two disulfide bonds. As to expression, expressed exclusively in Leydig cells of the testis.

The protein localises to the secreted. In terms of biological role, seems to play a role in testicular function. May be a trophic hormone with a role in testicular descent in fetal life. Is a ligand for LGR8 receptor. This Mus musculus (Mouse) protein is Insulin-like 3 (Insl3).